We begin with the raw amino-acid sequence, 126 residues long: Histone H2B type 1-N (126 aa).

Residues 1–12 (MPEPSKSAPAPK) are compositionally biased toward low complexity. The interval 1 to 36 (MPEPSKSAPAPKKGSKKAVTKAQKKDGKKRKRSRKE) is disordered. An N-acetylproline modification is found at Pro2. Glu3 is subject to ADP-ribosyl glutamic acid. Lys6 carries the N6-(2-hydroxyisobutyryl)lysine; alternate modification. N6-(beta-hydroxybutyryl)lysine; alternate is present on Lys6. The residue at position 6 (Lys6) is an N6-acetyllysine; alternate. An N6-butyryllysine; alternate modification is found at Lys6. An N6-crotonyllysine; alternate modification is found at Lys6. Lys6 carries the N6-lactoyllysine; alternate modification. Residue Lys6 forms a Glycyl lysine isopeptide (Lys-Gly) (interchain with G-Cter in SUMO2); alternate linkage. At Ser7 the chain carries ADP-ribosylserine. N6-(beta-hydroxybutyryl)lysine; alternate is present on Lys12. 2 positions are modified to N6-acetyllysine; alternate: Lys12 and Lys13. Residues Lys12 and Lys13 each carry the N6-crotonyllysine; alternate modification. Lys12 is subject to N6-lactoyllysine; alternate. The residue at position 13 (Lys13) is an N6-(2-hydroxyisobutyryl)lysine; alternate. Phosphoserine; by STK4/MST1 is present on Ser15. Residues Lys16, Lys17, Lys21, and Lys24 each carry the N6-acetyllysine; alternate modification. 4 positions are modified to N6-crotonyllysine; alternate: Lys16, Lys17, Lys21, and Lys24. Residues Lys16, Lys17, Lys21, and Lys24 each carry the N6-lactoyllysine; alternate modification. An N6-(beta-hydroxybutyryl)lysine; alternate mark is found at Lys17 and Lys21. Lys17 bears the N6-glutaryllysine; alternate mark. N6-(2-hydroxyisobutyryl)lysine; alternate occurs at positions 21 and 24. Lys21 carries the post-translational modification N6-butyryllysine; alternate. Lys21 is covalently cross-linked (Glycyl lysine isopeptide (Lys-Gly) (interchain with G-Cter in SUMO2); alternate). N6-(2-hydroxyisobutyryl)lysine is present on Lys25. Lys35 bears the N6-(2-hydroxyisobutyryl)lysine; alternate mark. Residue Lys35 is modified to N6-(beta-hydroxybutyryl)lysine; alternate. N6-crotonyllysine; alternate is present on Lys35. The residue at position 35 (Lys35) is an N6-glutaryllysine; alternate. Lys35 bears the N6-succinyllysine; alternate mark. Lys35 participates in a covalent cross-link: Glycyl lysine isopeptide (Lys-Gly) (interchain with G-Cter in ubiquitin); alternate. At Glu36 the chain carries PolyADP-ribosyl glutamic acid. Ser37 carries the post-translational modification Phosphoserine; by AMPK. Residues Lys44, Lys47, and Lys58 each carry the N6-(2-hydroxyisobutyryl)lysine; alternate modification. N6-lactoyllysine; alternate is present on Lys44. Residues Lys44 and Lys47 each carry the N6-glutaryllysine; alternate modification. Lys47 carries the post-translational modification N6-methyllysine; alternate. Lys58 is modified (N6,N6-dimethyllysine; alternate). Arg80 carries the dimethylated arginine modification. An N6-(2-hydroxyisobutyryl)lysine; alternate modification is found at Lys86. Lys86 is modified (N6-(beta-hydroxybutyryl)lysine; alternate). Lys86 is subject to N6-acetyllysine; alternate. Position 86 is an N6-lactoyllysine; alternate (Lys86). Lys86 is modified (N6,N6,N6-trimethyllysine; alternate). Omega-N-methylarginine is present on residues Arg87 and Arg93. Residue Lys109 is modified to N6-(2-hydroxyisobutyryl)lysine; alternate. Lys109 bears the N6-lactoyllysine; alternate mark. At Lys109 the chain carries N6-glutaryllysine; alternate. At Lys109 the chain carries N6-methyllysine; alternate. An O-linked (GlcNAc) serine glycan is attached at Ser113. Position 116 is a phosphothreonine (Thr116). Lys117 and Lys121 each carry N6-(2-hydroxyisobutyryl)lysine; alternate. Lys117 and Lys121 each carry N6-(beta-hydroxybutyryl)lysine; alternate. N6-lactoyllysine; alternate is present on residues Lys117 and Lys121. Residues Lys117 and Lys121 each carry the N6-glutaryllysine; alternate modification. 2 positions are modified to N6-succinyllysine; alternate: Lys117 and Lys121. An N6-malonyllysine; alternate modification is found at Lys117. An N6-methylated lysine; alternate modification is found at Lys117. A Glycyl lysine isopeptide (Lys-Gly) (interchain with G-Cter in ubiquitin); alternate cross-link involves residue Lys121.

The protein belongs to the histone H2B family. As to quaternary structure, the nucleosome is a histone octamer containing two molecules each of H2A, H2B, H3 and H4 assembled in one H3-H4 heterotetramer and two H2A-H2B heterodimers. The octamer wraps approximately 147 bp of DNA. Monoubiquitination at Lys-35 (H2BK34Ub) by the MSL1/MSL2 dimer is required for histone H3 'Lys-4' (H3K4me) and 'Lys-79' (H3K79me) methylation and transcription activation at specific gene loci, such as HOXA9 and MEIS1 loci. Similarly, monoubiquitination at Lys-121 (H2BK120Ub) by the RNF20/40 complex gives a specific tag for epigenetic transcriptional activation and is also prerequisite for histone H3 'Lys-4' and 'Lys-79' methylation. It also functions cooperatively with the FACT dimer to stimulate elongation by RNA polymerase II. H2BK120Ub also acts as a regulator of mRNA splicing: deubiquitination by USP49 is required for efficient cotranscriptional splicing of a large set of exons. In terms of processing, phosphorylation at Ser-37 (H2BS36ph) by AMPK in response to stress promotes transcription. Phosphorylated on Ser-15 (H2BS14ph) by STK4/MST1 during apoptosis; which facilitates apoptotic chromatin condensation. Also phosphorylated on Ser-15 in response to DNA double strand breaks (DSBs), and in correlation with somatic hypermutation and immunoglobulin class-switch recombination. Post-translationally, glcNAcylation at Ser-113 promotes monoubiquitination of Lys-121. It fluctuates in response to extracellular glucose, and associates with transcribed genes. ADP-ribosylated by PARP1 or PARP2 on Ser-7 (H2BS6ADPr) in response to DNA damage. H2BS6ADPr promotes recruitment of CHD1L. Mono-ADP-ribosylated on Glu-3 (H2BE2ADPr) by PARP3 in response to single-strand breaks. Poly ADP-ribosylation on Glu-36 (H2BE35ADPr) by PARP1 regulates adipogenesis: it inhibits phosphorylation at Ser-37 (H2BS36ph), thereby blocking expression of pro-adipogenetic genes. In terms of processing, crotonylation (Kcr) is specifically present in male germ cells and marks testis-specific genes in post-meiotic cells, including X-linked genes that escape sex chromosome inactivation in haploid cells. Crotonylation marks active promoters and enhancers and confers resistance to transcriptional repressors. It is also associated with post-meiotically activated genes on autosomes. Post-translationally, lactylated in macrophages by EP300/P300 by using lactoyl-CoA directly derived from endogenous or exogenous lactate, leading to stimulates gene transcription.

It is found in the nucleus. The protein resides in the chromosome. Its function is as follows. Core component of nucleosome. Nucleosomes wrap and compact DNA into chromatin, limiting DNA accessibility to the cellular machineries which require DNA as a template. Histones thereby play a central role in transcription regulation, DNA repair, DNA replication and chromosomal stability. DNA accessibility is regulated via a complex set of post-translational modifications of histones, also called histone code, and nucleosome remodeling. In Homo sapiens (Human), this protein is Histone H2B type 1-N.